The sequence spans 504 residues: Pre-mRNA-processing factor 19 (504 aa).

N-acetylserine is present on Ser2. Positions 2 to 73 constitute a U-box domain; sequence SLICSISNEV…KPPSATSIPA (72 aa). Residues 68–223 form a may mediate interaction with PSMC5 region; sequence ATSIPAILKA…VGLHSASIPG (156 aa). Residues Lys122, Lys179, Lys244, and Lys261 each carry the N6-acetyllysine modification. The WD 1 repeat unit spans residues 219–259; sequence ASIPGILALDLCPSDTNKILTGGADKNVVVFDKSSEQILAT. WD repeat units follow at residues 262–301, 304–345, 348–387, 390–429, 433–472, and 473–503; these read GHTK…CVQV, AHES…TKVT, TSGC…NVAN, GHSG…NFKT, DNNF…LHFT, and EHSG…KFYS.

The protein belongs to the WD repeat PRP19 family. In terms of assembly, homotetramer. Component of activated, catalytic and post-catalytic spliceosomes. Component of the Prp19 complex/PRP19C/Nineteen complex/NTC and related complexes described as PRP19-CDC5L splicing complex and PSO4 complex. A homotetramer of PRPF19, CDC5L, PLRG1 and BCAS2 constitute the core of those complexes. The interaction with CDC5L, PLRG1 and BCAS2 is direct within this core complex. At least three less stably associated proteins CTNNBL1, CWC15 and HSPA8 are found in the Prp19 complex. The Prp19 complex associates with the spliceosome during its assembly and remodeling recruiting additional proteins. Component of the XAB2 complex, a multimeric protein complex composed of XAB2, PRPF19, AQR, ZNF830, ISY1, and PPIE. Interacts with CWC22 and EIF4A3 in an RNA-independent manner. Interacts with RPA1 and RPA2; the PRP19-CDC5L complex is recruited to the sites of DNA repair where it interacts with the replication protein A complex (RPA). Interacts with SETMAR; required for SETMAR recruitment to site of DNA damage. Interacts with U2AF2; the interaction is direct and recruits the Prp19 complex to RNA polymerase II C-terminal domain (CTD) and the pre-mRNA. Interacts with PRPF3. Interacts with APEX1, DNTT and PSMB4. Interacts with PSMC5. Interacts with KNSTRN. Interacts (via N-terminus) with CDC5L. Interacts with KHDC4. Interacts with USB1. Interacts with DDX41.

The protein localises to the nucleus. The protein resides in the nucleoplasm. Its subcellular location is the cytoplasm. It is found in the cytoskeleton. It localises to the spindle. The protein localises to the lipid droplet. It catalyses the reaction S-ubiquitinyl-[E2 ubiquitin-conjugating enzyme]-L-cysteine + [acceptor protein]-L-lysine = [E2 ubiquitin-conjugating enzyme]-L-cysteine + N(6)-ubiquitinyl-[acceptor protein]-L-lysine.. It functions in the pathway protein modification; protein ubiquitination. Ubiquitin-protein ligase which is a core component of several complexes mainly involved pre-mRNA splicing and DNA repair. Required for pre-mRNA splicing as component of the spliceosome. Core component of the PRP19C/Prp19 complex/NTC/Nineteen complex which is part of the spliceosome and participates in its assembly, its remodeling and is required for its activity. During assembly of the spliceosome, mediates 'Lys-63'-linked polyubiquitination of the U4 spliceosomal protein PRPF3. Ubiquitination of PRPF3 allows its recognition by the U5 component PRPF8 and stabilizes the U4/U5/U6 tri-snRNP spliceosomal complex. Recruited to RNA polymerase II C-terminal domain (CTD) and the pre-mRNA, it may also couple the transcriptional and spliceosomal machineries. The XAB2 complex, which contains PRPF19, is also involved in pre-mRNA splicing, transcription and transcription-coupled repair. Beside its role in pre-mRNA splicing PRPF19, as part of the PRP19-CDC5L complex, plays a role in the DNA damage response/DDR. It is recruited to the sites of DNA damage by the RPA complex where PRPF19 directly ubiquitinates RPA1 and RPA2. 'Lys-63'-linked polyubiquitination of the RPA complex allows the recruitment of the ATR-ATRIP complex and the activation of ATR, a master regulator of the DNA damage response. May also play a role in DNA double-strand break (DSB) repair by recruiting the repair factor SETMAR to altered DNA. As part of the PSO4 complex may also be involved in the DNA interstrand cross-links/ICLs repair process. In addition, may also mediate 'Lys-48'-linked polyubiquitination of substrates and play a role in proteasomal degradation. May play a role in the biogenesis of lipid droplets. May play a role in neural differentiation possibly through its function as part of the spliceosome. This chain is Pre-mRNA-processing factor 19 (PRPF19), found in Bos taurus (Bovine).